A 580-amino-acid polypeptide reads, in one-letter code: UPF0329 protein ECU06_0080 (580 aa).

The segment covering 308-330 (RQKRREREMEKSMKELLRDEEKA) has biased composition (basic and acidic residues). The disordered stretch occupies residues 308–384 (RQKRREREME…KTGKKSKGGR (77 aa)). Over residues 331 to 340 (KSKKGRKKKS) the composition is skewed to basic residues. Residues 351-363 (SETEEVEASEEME) are compositionally biased toward acidic residues. The span at 372 to 384 (ARRKTGKKSKGGR) shows a compositional bias: basic residues.

The protein belongs to the UPF0329 family.

The protein is UPF0329 protein ECU06_0080 of Encephalitozoon cuniculi (strain GB-M1) (Microsporidian parasite).